The sequence spans 119 residues: Hydrogenase maturation factor HypA (119 aa).

Histidine 2 is a binding site for Ni(2+). Positions 73, 76, 89, and 92 each coordinate Zn(2+).

It belongs to the HypA/HybF family.

Its function is as follows. Involved in the maturation of [NiFe] hydrogenases. Required for nickel insertion into the metal center of the hydrogenase. In Dehalococcoides mccartyi (strain ATCC BAA-2100 / JCM 16839 / KCTC 5957 / BAV1), this protein is Hydrogenase maturation factor HypA.